We begin with the raw amino-acid sequence, 184 residues long: Photosystem I assembly protein Ycf4 (184 aa).

Helical transmembrane passes span 22–42 (FCWAFILFLGSLGFLLVGTSS) and 57–77 (IIFFPQGIVMSFYGIAGLFIS).

It belongs to the Ycf4 family.

The protein resides in the plastid. Its subcellular location is the chloroplast thylakoid membrane. In terms of biological role, seems to be required for the assembly of the photosystem I complex. This is Photosystem I assembly protein Ycf4 from Olimarabidopsis pumila (Dwarf rocket).